A 387-amino-acid chain; its full sequence is S-adenosylmethionine synthase (387 aa).

Residue H15 participates in ATP binding. D17 contacts Mg(2+). E43 is a K(+) binding site. E56 and Q99 together coordinate L-methionine. The flexible loop stretch occupies residues 99–109; sequence QSPDIAQGVNA. Residues 166–168, 232–233, D241, 247–248, A264, and K268 contribute to the ATP site; these read DAK, RF, and RK. Residue D241 coordinates L-methionine. K272 contacts L-methionine.

It belongs to the AdoMet synthase family. Homotetramer; dimer of dimers. Mg(2+) serves as cofactor. K(+) is required as a cofactor.

Its subcellular location is the cytoplasm. It catalyses the reaction L-methionine + ATP + H2O = S-adenosyl-L-methionine + phosphate + diphosphate. It functions in the pathway amino-acid biosynthesis; S-adenosyl-L-methionine biosynthesis; S-adenosyl-L-methionine from L-methionine: step 1/1. Its function is as follows. Catalyzes the formation of S-adenosylmethionine (AdoMet) from methionine and ATP. The overall synthetic reaction is composed of two sequential steps, AdoMet formation and the subsequent tripolyphosphate hydrolysis which occurs prior to release of AdoMet from the enzyme. This chain is S-adenosylmethionine synthase, found in Dechloromonas aromatica (strain RCB).